A 337-amino-acid chain; its full sequence is Heme A synthase (337 aa).

5 helical membrane passes run 6–26 (ITKW…IGGI), 87–107 (FIHR…VIYF), 119–139 (LPYI…WYMV), 154–174 (LAFH…QLIK), and 192–212 (LIFS…GALV). Residue His-256 participates in heme binding. 3 helical membrane-spanning segments follow: residues 258–278 (LVGY…LKIE), 285–305 (IAYF…ITLL), and 308–328 (VPII…SVII). Heme is bound at residue His-316.

It belongs to the COX15/CtaA family. Type 2 subfamily. As to quaternary structure, interacts with CtaB. It depends on heme b as a cofactor.

It is found in the cell membrane. It carries out the reaction Fe(II)-heme o + 2 A + H2O = Fe(II)-heme a + 2 AH2. It functions in the pathway porphyrin-containing compound metabolism; heme A biosynthesis; heme A from heme O: step 1/1. In terms of biological role, catalyzes the conversion of heme O to heme A by two successive hydroxylations of the methyl group at C8. The first hydroxylation forms heme I, the second hydroxylation results in an unstable dihydroxymethyl group, which spontaneously dehydrates, resulting in the formyl group of heme A. The polypeptide is Heme A synthase (Rickettsia rickettsii (strain Iowa)).